The primary structure comprises 368 residues: 3-dehydroquinate synthase (368 aa).

NAD(+) is bound by residues 99-103 (GVVGD), 123-124 (TT), K136, and K145. 3 residues coordinate Zn(2+): E178, H242, and H259.

It belongs to the sugar phosphate cyclases superfamily. Dehydroquinate synthase family. NAD(+) serves as cofactor. It depends on Co(2+) as a cofactor. The cofactor is Zn(2+).

Its subcellular location is the cytoplasm. It carries out the reaction 7-phospho-2-dehydro-3-deoxy-D-arabino-heptonate = 3-dehydroquinate + phosphate. Its pathway is metabolic intermediate biosynthesis; chorismate biosynthesis; chorismate from D-erythrose 4-phosphate and phosphoenolpyruvate: step 2/7. Its function is as follows. Catalyzes the conversion of 3-deoxy-D-arabino-heptulosonate 7-phosphate (DAHP) to dehydroquinate (DHQ). The protein is 3-dehydroquinate synthase of Chlorobaculum tepidum (strain ATCC 49652 / DSM 12025 / NBRC 103806 / TLS) (Chlorobium tepidum).